A 223-amino-acid chain; its full sequence is Twisted gastrulation protein homolog 1 (223 aa).

The signal sequence occupies residues 1-25 (MKLHYVAVLTLAILMFLTWLPESLS). 2 N-linked (GlcNAc...) asparagine glycosylation sites follow: asparagine 52 and asparagine 81.

The protein belongs to the twisted gastrulation protein family. In terms of assembly, interacts with CHRD and BMP4. This interaction enhances CHRD/BMP4 complex formation. Interacts with BMP7.

It is found in the secreted. Functionally, may be involved in dorsoventral axis formation. Seems to antagonize BMP signaling by forming ternary complexes with CHRD and BMPs, thereby preventing BMPs from binding to their receptors. In addition to the anti-BMP function, also has pro-BMP activity, partly mediated by cleavage and degradation of CHRD, which releases BMPs from ternary complexes. May be an important modulator of BMP-regulated cartilage development and chondrocyte differentiation. May play a role in thymocyte development. This is Twisted gastrulation protein homolog 1 (TWSG1) from Homo sapiens (Human).